The chain runs to 121 residues: Centrocin 2 (121 aa).

An N-terminal signal peptide occupies residues 1-20; that stretch reads MMIKIAVVLCAVMATSMVFA. Residues 21 to 50 constitute a propeptide that is removed on maturation; sequence NDVKEQELADLLDLLISEEVSSPDDAVAES. A 6'-bromotryptophan mark is found at Trp-51 and Trp-59. Cys-77 and Cys-112 form a disulfide bridge. Positions 83–106 are excised as a propeptide; the sequence is SPQEARAKVLEAFPEMKESDLDEE. Gln-107 is modified (pyrrolidone carboxylic acid). At His-119 the chain carries Histidine amide.

As to quaternary structure, heterodimer of a light and a heavy chain, probably disulfide-linked.

Functionally, has antimicrobial activity against Gram-negative bacteria, Gram-positive bacteria and against fungi with minimum inhibitory concentration (MIC) between 0.78 uM and 50 uM. Shows little hemolytic activity at concentrations up to 12.5 uM but &gt;50% lysis at 100 uM. The sequence is that of Centrocin 2 from Echinus esculentus (Sea urchin).